A 577-amino-acid chain; its full sequence is Moesin (577 aa).

Residues 2-295 (PKTISVRVTT…GNHELYMRRR (294 aa)) enclose the FERM domain. Residue serine 74 is modified to Phosphoserine. Lysine 79 is subject to N6-acetyllysine. Lysine 83 carries the N6-succinyllysine modification. The [IL]-x-C-x-x-[DE] motif signature appears at 115-120 (IYCPPE). Tyrosine 116 carries the phosphotyrosine modification. Cysteine 117 carries the S-nitrosocysteine modification. N6-acetyllysine is present on residues lysine 139 and lysine 165. Disordered stretches follow at residues 322–342 (LLEN…KIER), 358–453 (TKKA…QMVQ), and 468–549 (STPH…AENM). The span at 358–401 (TKKAQQELEEQTRRALELEQERKRAQSEAEKLAKERQEAEEAKE) shows a compositional bias: basic and acidic residues. Phosphoserine is present on serine 407. 2 stretches are compositionally biased toward basic and acidic residues: residues 438 to 447 (KESEAEECHQ) and 492 to 519 (AELR…ERVQ). At serine 527 the chain carries Phosphoserine. Basic and acidic residues predominate over residues 531–549 (NARDESKKTTNDMIHAENM). Position 558 is a phosphothreonine; by ROCK2 and STK10 (threonine 558).

As to quaternary structure, in resting T-cells, part of a PAG1-NHERF1-MSN complex which is disrupted upon TCR activation. Interacts with NHERF1. Interacts with PPP1R16B. Interacts with PDZD8. Interacts with SELPLG and SYK; these interactions mediate the activation of SYK by SELPLG. Interacts with PDPN (via cytoplasmic domain); this interaction activates RHOA and promotes epithelial-mesenchymal transition. Interacts with SPN/CD43 cytoplasmic tail. Interacts with CD44. Interacts with ICAM2. Interacts with ICAM3 (via C-terminus). Interacts with PDZD8. Interacts with F-actin. Interacts with CD46. Interacts with PTPN6. In terms of processing, phosphorylation on Thr-558 is crucial for the formation of microvilli-like structures. Phosphorylation by ROCK2 suppresses the head-to-tail association of the N-terminal and C-terminal halves resulting in an opened conformation which is capable of actin and membrane-binding. Phosphorylation on Thr-558 by STK10 negatively regulates lymphocyte migration and polarization. Post-translationally, S-nitrosylation of Cys-117 is induced by interferon-gamma and oxidatively-modified low-densitity lipoprotein (LDL(ox)) implicating the iNOS-S100A8/9 transnitrosylase complex.

It localises to the cell membrane. The protein localises to the cytoplasm. Its subcellular location is the cytoskeleton. It is found in the apical cell membrane. The protein resides in the cell projection. It localises to the microvillus membrane. The protein localises to the microvillus. With respect to regulation, a head-to-tail association, of the N-terminal and C-terminal halves results in a closed conformation (inactive form) which is incapable of actin or membrane-binding. Its function is as follows. Ezrin-radixin-moesin (ERM) family protein that connects the actin cytoskeleton to the plasma membrane and thereby regulates the structure and function of specific domains of the cell cortex. Tethers actin filaments by oscillating between a resting and an activated state providing transient interactions between moesin and the actin cytoskeleton. Once phosphorylated on its C-terminal threonine, moesin is activated leading to interaction with F-actin and cytoskeletal rearrangement. These rearrangements regulate many cellular processes, including cell shape determination, membrane transport, and signal transduction. The role of moesin is particularly important in immunity acting on both T and B-cells homeostasis and self-tolerance, regulating lymphocyte egress from lymphoid organs. Modulates phagolysosomal biogenesis in macrophages. Participates also in immunologic synapse formation. The protein is Moesin of Rattus norvegicus (Rat).